Consider the following 89-residue polypeptide: Putative defensin-like protein 254 (89 aa).

Positions 1–20 (MHNISFKLLLLCDLFLSSSS) are cleaved as a signal peptide. Intrachain disulfides connect Cys31-Cys48 and Cys37-Cys55.

The protein belongs to the DEFL family.

It localises to the secreted. The polypeptide is Putative defensin-like protein 254 (Arabidopsis thaliana (Mouse-ear cress)).